A 301-amino-acid polypeptide reads, in one-letter code: MPIIIDKDLPARKVLQEENIFVMTKERAETQDIRALKIAILNLMPTKQETEAQLLRLIGNTPLQLDVHLLHMESHLSRNVAQEHLTSFYKTFRDIENEKFDGLIITGAPVETLSFEEVDYWEELKRIMEYSKTNVTSTLHICWGAQAGLYYHYGVPKYPLKEKMFGVFEHEVREQHVKLLQGFDELFFAPHSRHTEVRENDIRGVKELTLLANSEEAGVHLVIGPEGRQVFALGHSEYSCDTLKQEYERDRQKGLNIDVPKNYFKHNNPNEKPLVRWRSHGNLLFSNWLNYYVYQETPYVL.

The active-site Acyl-thioester intermediate is the cysteine 142. Lysine 163 and serine 192 together coordinate substrate. Histidine 235 serves as the catalytic Proton acceptor. Glutamate 237 is a catalytic residue. Arginine 249 contributes to the substrate binding site.

The protein belongs to the MetA family.

It localises to the cytoplasm. The enzyme catalyses L-homoserine + acetyl-CoA = O-acetyl-L-homoserine + CoA. It functions in the pathway amino-acid biosynthesis; L-methionine biosynthesis via de novo pathway; O-acetyl-L-homoserine from L-homoserine: step 1/1. Transfers an acetyl group from acetyl-CoA to L-homoserine, forming acetyl-L-homoserine. The sequence is that of Homoserine O-acetyltransferase from Bacillus anthracis (strain A0248).